A 464-amino-acid chain; its full sequence is MLATDSDPIVAIATAAGRGGIGVVRVSFGRGGEAAALPLIDALCGQQLAPRHASYVPFVDEHGAPLDRGIALYFPAPHSYTGEHVLELQGHGGPIVMQLLLQRCLDAGRGFGLRLAQPGEFTRRAFLNDKLDLAQAEAVADLIEASTEAAARSAGRSLDGAFSRQIHALVEDVITLRMLVEATLDFPEEEIDFLEAADARGKLARIREQLAHVLGDARQGALLREGLSVVLAGQPNVGKSSLLNALAGAELAIVTPIAGTTRDKVAQTIQVEGIPLHIIDTAGLRETEDEVERIGIARTWSEIERADVVLHLLDSRTGMTADDEVIAARFPGGVPVVRVLNKTDLTGVPACVEHPAAAGDLTEVHLSAKRGDGIDMLRAELLRIAGWQAGAEGVYLARERHLIALRAAQEHLAQAADHAEQRAQSLDLFAEELRLAQEQLNAITGEFTSDDLLGVIFSRFCIGK.

Residues Arg25, Glu87, and Lys130 each contribute to the (6S)-5-formyl-5,6,7,8-tetrahydrofolate site. Residues 226–386 (GLSVVLAGQP…LRAELLRIAG (161 aa)) enclose the TrmE-type G domain. Asn236 lines the K(+) pocket. GTP contacts are provided by residues 236–241 (NVGKSS), 255–261 (TPIAGTT), and 280–283 (DTAG). Position 240 (Ser240) interacts with Mg(2+). Residues Thr255, Ile257, and Thr260 each contribute to the K(+) site. Thr261 provides a ligand contact to Mg(2+). Lys464 provides a ligand contact to (6S)-5-formyl-5,6,7,8-tetrahydrofolate.

It belongs to the TRAFAC class TrmE-Era-EngA-EngB-Septin-like GTPase superfamily. TrmE GTPase family. Homodimer. Heterotetramer of two MnmE and two MnmG subunits. Requires K(+) as cofactor.

It is found in the cytoplasm. In terms of biological role, exhibits a very high intrinsic GTPase hydrolysis rate. Involved in the addition of a carboxymethylaminomethyl (cmnm) group at the wobble position (U34) of certain tRNAs, forming tRNA-cmnm(5)s(2)U34. The protein is tRNA modification GTPase MnmE of Burkholderia ambifaria (strain MC40-6).